A 395-amino-acid polypeptide reads, in one-letter code: Vascular endothelial growth factor A, long form (395 aa).

Disordered regions lie at residues 1 to 45 (MTDR…VEGV) and 73 to 175 (EAEP…AGPG). The span at 73 to 85 (EAEPSGAARSASS) shows a compositional bias: low complexity. Acidic residues predominate over residues 91 to 102 (QPEEGEEEEEKE). 2 stretches are compositionally biased toward low complexity: residues 123–143 (AAVC…ARAS) and 165–175 (RRGSASRAGPG). Disulfide bonds link Cys-232–Cys-274, Cys-263–Cys-308, and Cys-267–Cys-310. Asn-281 carries N-linked (GlcNAc...) asparagine glycosylation. Positions 314–323 (KDRARQEKKS) are enriched in basic and acidic residues. The interval 314–344 (KDRARQEKKSVRGKGKGQKRKRKKSRYKSWS) is disordered. The segment covering 324–340 (VRGKGKGQKRKRKKSRY) has biased composition (basic residues).

The protein belongs to the PDGF/VEGF growth factor family. As to quaternary structure, homodimer; disulfide-linked. Also found as heterodimer with PGF. Interacts with NRP1. Interacts with isoform 2 of BSG. Interacts with CD82; this interaction inhibits VEGFA-mediated signaling pathway. Post-translationally, produced by use of an alternative upstream CUG codon and post-translationally processed into the N-terminal N-VEGF form and the C-terminal secreted VEGFA form. As to expression, higher expression in pituitary tumors than the pituitary gland. Widely expressed. In terms of tissue distribution, not widely expressed.

Its subcellular location is the cytoplasm. It is found in the nucleus. The protein resides in the secreted. It localises to the endoplasmic reticulum. The protein localises to the golgi apparatus. Its subcellular location is the extracellular space. It is found in the extracellular matrix. In terms of biological role, participates in the induction of key genes involved in the response to hypoxia and in the induction of angiogenesis such as HIF1A. Involved in protecting cells from hypoxia-mediated cell death. Its function is as follows. Growth factor active in angiogenesis, vasculogenesis and endothelial cell growth. Induces endothelial cell proliferation, promotes cell migration, inhibits apoptosis and induces permeabilization of blood vessels. Binds to the FLT1/VEGFR1 and KDR/VEGFR2 receptors, heparan sulfate and heparin. Binds to the NRP1/neuropilin-1 receptor. Binding to NRP1 initiates a signaling pathway needed for motor neuron axon guidance and cell body migration, including for the caudal migration of facial motor neurons from rhombomere 4 to rhombomere 6 during embryonic development. Also binds the DEAR/FBXW7-AS1 receptor. Binds to the KDR receptor but does not activate downstream signaling pathways, does not activate angiogenesis and inhibits tumor growth. The polypeptide is Vascular endothelial growth factor A, long form (VEGFA) (Homo sapiens (Human)).